A 77-amino-acid polypeptide reads, in one-letter code: Adipokinetic prohormone type 3 (77 aa).

Positions Met-1 to Ala-22 are cleaved as a signal peptide. Gln-23 carries the post-translational modification Pyrrolidone carboxylic acid. A Tryptophan amide modification is found at Trp-30.

This sequence belongs to the AKH/HRTH/RPCH family.

The protein localises to the secreted. This hormone, released from cells in the corpora cardiaca, causes release of diglycerides from the fat body and stimulation of muscles to use these diglycerides as an energy source during energy-demanding processes. This chain is Adipokinetic prohormone type 3, found in Locusta migratoria (Migratory locust).